The chain runs to 218 residues: Glutathione S-transferase Mu 2 (218 aa).

The GST N-terminal domain occupies 2–88; it reads PMTLGYWNIR…YIARKHNLCG (87 aa). Glutathione is bound at residue 7–8; it reads YW. Residues S27 and S44 each carry the phosphoserine modification. Residues 43–46, K50, 59–60, and 72–73 contribute to the glutathione site; these read RSQW, NL, and QS. The 119-residue stretch at 90 to 208 folds into the GST C-terminal domain; that stretch reads SEKEQIREDI…KSSRFLPRPV (119 aa). Y116 lines the substrate pocket.

This sequence belongs to the GST superfamily. Mu family. Homodimer. As to expression, muscle.

Its subcellular location is the cytoplasm. It catalyses the reaction RX + glutathione = an S-substituted glutathione + a halide anion + H(+). The enzyme catalyses 11(S)-hydroxy-14(S),15(S)-epoxy-(5Z,8Z,12E)-eicosatrienoate + glutathione = (11S,15S)-dihydroxy-14(R)-S-glutathionyl-(5Z,8Z,12E)-eicosatrienoate. In terms of biological role, conjugation of reduced glutathione to a wide number of exogenous and endogenous hydrophobic electrophiles. Participates in the formation of novel hepoxilin regioisomers. The chain is Glutathione S-transferase Mu 2 from Homo sapiens (Human).